The sequence spans 146 residues: MYPAHLLVLLAVCVSLLGAASVPPQPLNLVQFGYLIQCANHGSRATWHYMDYGCYCGAGGSGTPVDDLDRCCKIHDDCYGDAEKKGCSPKMLAYDYYCGENGPYCKNIKKECQRFVCACDVQAAKCFAGAPYNDANWNIDTTKHCQ.

The signal sequence occupies residues M1–A19. Positions A20–L27 are excised as a propeptide. 7 cysteine pairs are disulfide-bonded: C38–C98, C54–C145, C56–C72, C71–C126, C78–C119, C87–C112, and C105–C117. Y55, G57, and G59 together coordinate Ca(2+). Residue H75 is part of the active site. Position 76 (D76) interacts with Ca(2+). The active site involves D120.

This sequence belongs to the phospholipase A2 family. Group I subfamily. D49 sub-subfamily. Ca(2+) is required as a cofactor. Expressed by the venom gland.

It is found in the secreted. The enzyme catalyses a 1,2-diacyl-sn-glycero-3-phosphocholine + H2O = a 1-acyl-sn-glycero-3-phosphocholine + a fatty acid + H(+). In terms of biological role, snake venom phospholipase A2 (PLA2) that inhibits collagen-induced platelet aggregation. PLA2 catalyzes the calcium-dependent hydrolysis of the 2-acyl groups in 3-sn-phosphoglycerides. The polypeptide is Phospholipase A2 PS22 (Drysdalia coronoides (White-lipped snake)).